A 157-amino-acid chain; its full sequence is Small ribosomal subunit protein uS7 (157 aa).

It belongs to the universal ribosomal protein uS7 family. In terms of assembly, part of the 30S ribosomal subunit. Contacts proteins S9 and S11.

Functionally, one of the primary rRNA binding proteins, it binds directly to 16S rRNA where it nucleates assembly of the head domain of the 30S subunit. Is located at the subunit interface close to the decoding center, probably blocks exit of the E-site tRNA. In Borrelia hermsii (strain HS1 / DAH), this protein is Small ribosomal subunit protein uS7.